Reading from the N-terminus, the 162-residue chain is Phosphopantetheine adenylyltransferase (162 aa).

Ser11 contacts substrate. ATP-binding positions include 11 to 12 (SF) and His19. Substrate-binding residues include Lys43, Val76, and Arg90. Residues 91-93 (GLR), Glu101, and 126-132 (HLYISSS) contribute to the ATP site.

The protein belongs to the bacterial CoaD family. As to quaternary structure, homohexamer. Mg(2+) serves as cofactor.

It is found in the cytoplasm. It catalyses the reaction (R)-4'-phosphopantetheine + ATP + H(+) = 3'-dephospho-CoA + diphosphate. Its pathway is cofactor biosynthesis; coenzyme A biosynthesis; CoA from (R)-pantothenate: step 4/5. In terms of biological role, reversibly transfers an adenylyl group from ATP to 4'-phosphopantetheine, yielding dephospho-CoA (dPCoA) and pyrophosphate. The sequence is that of Phosphopantetheine adenylyltransferase from Streptococcus pneumoniae (strain CGSP14).